Here is a 135-residue protein sequence, read N- to C-terminus: Small ribosomal subunit protein bS6 (135 aa).

The disordered stretch occupies residues 96 to 135 (HAEGPSIQMQKRDERERGDRGDRSDRGDRGDRGDRGGFRR). Residues 105 to 135 (QKRDERERGDRGDRSDRGDRGDRGDRGGFRR) are compositionally biased toward basic and acidic residues.

Belongs to the bacterial ribosomal protein bS6 family.

In terms of biological role, binds together with bS18 to 16S ribosomal RNA. The protein is Small ribosomal subunit protein bS6 of Cereibacter sphaeroides (strain ATCC 17029 / ATH 2.4.9) (Rhodobacter sphaeroides).